The following is a 144-amino-acid chain: 6-pyruvoyl tetrahydrobiopterin synthase (144 aa).

S18 is modified (phosphoserine). H23 provides a ligand contact to Zn(2+). S27 carries the post-translational modification Phosphoserine. The Proton acceptor role is filled by C42. The Zn(2+) site is built by H48 and H50. The active-site Charge relay system is the H89. Y127 carries the post-translational modification Phosphotyrosine. E133 serves as the catalytic Charge relay system.

This sequence belongs to the PTPS family. Homodimer. Homohexamer formed of two homotrimers in a head to head fashion. Zn(2+) is required as a cofactor. Phosphorylation of Ser-18 is required for maximal enzyme activity.

It carries out the reaction 7,8-dihydroneopterin 3'-triphosphate = 6-pyruvoyl-5,6,7,8-tetrahydropterin + triphosphate + H(+). It participates in cofactor biosynthesis; tetrahydrobiopterin biosynthesis; tetrahydrobiopterin from 7,8-dihydroneopterin triphosphate: step 1/3. Its function is as follows. Involved in the biosynthesis of tetrahydrobiopterin, an essential cofactor of aromatic amino acid hydroxylases. Catalyzes the transformation of 7,8-dihydroneopterin triphosphate into 6-pyruvoyl tetrahydropterin. The polypeptide is 6-pyruvoyl tetrahydrobiopterin synthase (Mus musculus (Mouse)).